The following is a 367-amino-acid chain: Methionine aminopeptidase 1 (367 aa).

The C6H2-type zinc-finger motif lies at 3–57; the sequence is GILCASPGCGKPAKLQCPTCVNLKLETPSHFCSQECFKTFWPLHKMYHQKGQPEN. Zn(2+) contacts are provided by Cys-6, Cys-11, Cys-19, Cys-22, Cys-34, Cys-38, His-46, and His-50. His-185 serves as a coordination point for a protein. Asp-202, Asp-213, and His-276 together coordinate Zn(2+). His-283 contacts a protein. Positions 309 and 340 each coordinate Zn(2+).

It belongs to the peptidase M24A family. Methionine aminopeptidase type 1 subfamily. As to quaternary structure, associates with the 60S ribosomal subunit of the 80S translational complex. Zn(2+) is required as a cofactor. Co(2+) serves as cofactor. Requires Mn(2+) as cofactor. The cofactor is Fe(2+).

Its subcellular location is the cytoplasm. It carries out the reaction Release of N-terminal amino acids, preferentially methionine, from peptides and arylamides.. Functionally, cotranslationally removes the N-terminal methionine from nascent proteins. The N-terminal methionine is often cleaved when the second residue in the primary sequence is small and uncharged (Met-Ala-, Cys, Gly, Pro, Ser, Thr, or Val). This chain is Methionine aminopeptidase 1 (metap1), found in Dictyostelium discoideum (Social amoeba).